The following is a 212-amino-acid chain: Peptide methionine sulfoxide reductase MsrA (212 aa).

C52 is an active-site residue.

The protein belongs to the MsrA Met sulfoxide reductase family.

The catalysed reaction is L-methionyl-[protein] + [thioredoxin]-disulfide + H2O = L-methionyl-(S)-S-oxide-[protein] + [thioredoxin]-dithiol. It catalyses the reaction [thioredoxin]-disulfide + L-methionine + H2O = L-methionine (S)-S-oxide + [thioredoxin]-dithiol. Its function is as follows. Has an important function as a repair enzyme for proteins that have been inactivated by oxidation. Catalyzes the reversible oxidation-reduction of methionine sulfoxide in proteins to methionine. The polypeptide is Peptide methionine sulfoxide reductase MsrA (Escherichia coli (strain SMS-3-5 / SECEC)).